The following is a 361-amino-acid chain: Phosphoserine aminotransferase (361 aa).

L-glutamate is bound at residue arginine 42. Residues 76-77 (AR), tryptophan 102, threonine 153, aspartate 173, and glutamine 196 each bind pyridoxal 5'-phosphate. Residue lysine 197 is modified to N6-(pyridoxal phosphate)lysine. Pyridoxal 5'-phosphate is bound at residue 238–239 (NT).

It belongs to the class-V pyridoxal-phosphate-dependent aminotransferase family. SerC subfamily. As to quaternary structure, homodimer. Pyridoxal 5'-phosphate is required as a cofactor.

It localises to the cytoplasm. It carries out the reaction O-phospho-L-serine + 2-oxoglutarate = 3-phosphooxypyruvate + L-glutamate. It catalyses the reaction 4-(phosphooxy)-L-threonine + 2-oxoglutarate = (R)-3-hydroxy-2-oxo-4-phosphooxybutanoate + L-glutamate. It participates in amino-acid biosynthesis; L-serine biosynthesis; L-serine from 3-phospho-D-glycerate: step 2/3. It functions in the pathway cofactor biosynthesis; pyridoxine 5'-phosphate biosynthesis; pyridoxine 5'-phosphate from D-erythrose 4-phosphate: step 3/5. Functionally, catalyzes the reversible conversion of 3-phosphohydroxypyruvate to phosphoserine and of 3-hydroxy-2-oxo-4-phosphonooxybutanoate to phosphohydroxythreonine. In Yersinia pseudotuberculosis serotype IB (strain PB1/+), this protein is Phosphoserine aminotransferase.